Reading from the N-terminus, the 496-residue chain is Zinc finger protein PLAGL2 (496 aa).

C2H2-type zinc fingers lie at residues 68–92, 98–120, 127–149, 156–178, 191–213, and 219–242; these read YSCP…MATH, HQCM…LQTH, LHCS…LAMH, LSCK…LKAH, HPCD…LVVH, and FLCQ…KKSH.

This sequence belongs to the krueppel C2H2-type zinc-finger protein family.

Its subcellular location is the nucleus. Functionally, shows weak transcriptional activatory activity. The sequence is that of Zinc finger protein PLAGL2 (PLAGL2) from Homo sapiens (Human).